Consider the following 745-residue polypeptide: Putative cryptochrome DASH, mitochondrial (745 aa).

The N-terminal 22 residues, 1–22 (MAPSKVVIYAMRRELRLSDNPI), are a transit peptide targeting the mitochondrion. Residues 23-166 (FHHLSNPESK…DFKLWDDEKY (144 aa)) enclose the Photolyase/cryptochrome alpha/beta domain. 2 disordered regions span residues 563–688 (KFNL…GGGG) and 702–745 (GGYR…QTDA). Over residues 571–584 (SKVKKRPFFRKRGT) the composition is skewed to basic residues. Residues 591-603 (GSAESPGSSDSHS) show a composition bias toward low complexity. A compositionally biased stretch (gly residues) spans 604–616 (GSGGSPDGSGGGN). A compositionally biased stretch (low complexity) spans 632–648 (QQTHQGSGRSQSSSNHG). 2 stretches are compositionally biased toward gly residues: residues 672–688 (RGGG…GGGG) and 702–718 (GGYR…GGFR). The segment covering 735–745 (QQVASQFQTDA) has biased composition (polar residues).

The protein belongs to the DNA photolyase class-1 family. The cofactor is FAD. It depends on (6R)-5,10-methylene-5,6,7,8-tetrahydrofolate as a cofactor.

The protein localises to the mitochondrion. In terms of biological role, may have a photoreceptor function. The sequence is that of Putative cryptochrome DASH, mitochondrial (cry) from Neurospora crassa (strain ATCC 24698 / 74-OR23-1A / CBS 708.71 / DSM 1257 / FGSC 987).